Reading from the N-terminus, the 94-residue chain is Large ribosomal subunit protein uL29 (94 aa).

The tract at residues 65–94 (ANPGERKSRVFSRAKRKKKNLARLSAKAKG) is disordered. Residues 73 to 94 (RVFSRAKRKKKNLARLSAKAKG) are compositionally biased toward basic residues.

The protein belongs to the universal ribosomal protein uL29 family.

This is Large ribosomal subunit protein uL29 from Leptospira interrogans serogroup Icterohaemorrhagiae serovar copenhageni (strain Fiocruz L1-130).